A 477-amino-acid polypeptide reads, in one-letter code: Diacylglycerol O-acyltransferase 1-2 (477 aa).

Residues 1-48 (MAPPPSLAPDRGGGEPDDALRLRARAAAAAGDAPAPQQQQEQRHQEQQ) are disordered. Residues 12–21 (GGGEPDDALR) show a composition bias toward basic and acidic residues. Residues 25-40 (RAAAAAGDAPAPQQQQ) are compositionally biased toward low complexity. 7 helical membrane-spanning segments follow: residues 79-99 (HAGL…RLII), 123-143 (WPLL…LMVE), 155-175 (VVIL…VVVI), 182-202 (VLSG…LVSF), 230-250 (NIKW…TLCY), 263-283 (GWVV…GFII), and 319-339 (VWLC…AELL). Residues 346–352 (FYKDWWN) carry the FYXDWWN motif motif. The next 3 membrane-spanning stretches (helical) occupy residues 387-407 (GVAI…CVAV), 409-429 (CHIF…LVFL), and 442-462 (VGNM…CVLL). H401 is a catalytic residue.

The protein belongs to the membrane-bound acyltransferase family. Sterol o-acyltransferase subfamily.

Its subcellular location is the endoplasmic reticulum membrane. It catalyses the reaction an acyl-CoA + a 1,2-diacyl-sn-glycerol = a triacyl-sn-glycerol + CoA. It functions in the pathway glycerolipid metabolism; triacylglycerol biosynthesis. Involved in triacylglycerol (TAG) synthesis. Catalyzes the acylation of the sn-3 hydroxy group of sn-1,2-diacylglycerol using acyl-CoA. The chain is Diacylglycerol O-acyltransferase 1-2 from Oryza sativa subsp. japonica (Rice).